The following is a 194-amino-acid chain: Holliday junction branch migration complex subunit RuvA (194 aa).

The tract at residues 1-64 (MIGRLRGILA…EDSVSLYGFL (64 aa)) is domain I. Positions 65–140 (REGERRLFRD…RAADFSSGAP (76 aa)) are domain II. The flexible linker stretch occupies residues 140-144 (PITGQ). The interval 145–194 (LGPDAVSEATVALQQLGYKPAEAARMARDAGAEGDEVATVIRKALQAALR) is domain III.

It belongs to the RuvA family. Homotetramer. Forms an RuvA(8)-RuvB(12)-Holliday junction (HJ) complex. HJ DNA is sandwiched between 2 RuvA tetramers; dsDNA enters through RuvA and exits via RuvB. An RuvB hexamer assembles on each DNA strand where it exits the tetramer. Each RuvB hexamer is contacted by two RuvA subunits (via domain III) on 2 adjacent RuvB subunits; this complex drives branch migration. In the full resolvosome a probable DNA-RuvA(4)-RuvB(12)-RuvC(2) complex forms which resolves the HJ.

The protein localises to the cytoplasm. Functionally, the RuvA-RuvB-RuvC complex processes Holliday junction (HJ) DNA during genetic recombination and DNA repair, while the RuvA-RuvB complex plays an important role in the rescue of blocked DNA replication forks via replication fork reversal (RFR). RuvA specifically binds to HJ cruciform DNA, conferring on it an open structure. The RuvB hexamer acts as an ATP-dependent pump, pulling dsDNA into and through the RuvAB complex. HJ branch migration allows RuvC to scan DNA until it finds its consensus sequence, where it cleaves and resolves the cruciform DNA. This Xanthomonas axonopodis pv. citri (strain 306) protein is Holliday junction branch migration complex subunit RuvA.